Consider the following 280-residue polypeptide: Putative transcription factor kapC (280 aa).

Residues 1–102 (MQPALAPHPS…GKRPLSTSKR (102 aa)) are disordered. Residues 39-49 (PQPPAPQPPHM) are compositionally biased toward pro residues. Residues 79-89 (TQPDVTGQETP) are compositionally biased toward polar residues. In terms of domain architecture, bZIP spans 96–159 (PLSTSKRAAQ…EYIINLQSRL (64 aa)). Positions 97–120 (LSTSKRAAQNRAAQRAFRQRKEAH) are basic motif. Positions 124-155 (LEGKVKAYENMGEAIKALQAENYQLREYIINL) are leucine-zipper. Positions 169 to 280 (LPGNIDLSQP…EQTHGLPLIS (112 aa)) are disordered. Residues 197 to 211 (APPPTAPQQPQPPHA) are compositionally biased toward pro residues.

It belongs to the bZIP family.

It localises to the nucleus. Functionally, putative transcription factor. The protein is Putative transcription factor kapC (kapC) of Neosartorya fischeri (strain ATCC 1020 / DSM 3700 / CBS 544.65 / FGSC A1164 / JCM 1740 / NRRL 181 / WB 181) (Aspergillus fischerianus).